We begin with the raw amino-acid sequence, 51 residues long: UPF0181 protein VV2_0310 (51 aa).

This sequence belongs to the UPF0181 family.

The chain is UPF0181 protein VV2_0310 from Vibrio vulnificus (strain CMCP6).